The primary structure comprises 196 residues: UPF0319 protein VV0948 (196 aa).

Residues 1-19 form the signal peptide; the sequence is MKKMMILSALALFSSSLFA.

The protein belongs to the UPF0319 family.

The protein is UPF0319 protein VV0948 of Vibrio vulnificus (strain YJ016).